We begin with the raw amino-acid sequence, 167 residues long: MRVEVGQIVNTHGIKGEIKVKSNSDFTDVRFQPGQVLTVVHNNNDLEYTVKSHRVHKGLHMLTFEGINNINDIEHLKGSSIYQERDHEDIVLEENEFYYSDIIGCAVFDDQKTPIGRVINIFETGANDVWVIKGSKEYLIPYIADVVKEVDVENKKIIITPMEGLLD.

One can recognise a PRC barrel domain in the interval 94-165 (ENEFYYSDII…KIIITPMEGL (72 aa)).

The protein belongs to the RimM family. Binds ribosomal protein uS19.

The protein localises to the cytoplasm. An accessory protein needed during the final step in the assembly of 30S ribosomal subunit, possibly for assembly of the head region. Essential for efficient processing of 16S rRNA. May be needed both before and after RbfA during the maturation of 16S rRNA. It has affinity for free ribosomal 30S subunits but not for 70S ribosomes. This is Ribosome maturation factor RimM from Staphylococcus aureus (strain NCTC 8325 / PS 47).